A 160-amino-acid polypeptide reads, in one-letter code: Transcription elongation factor GreA (160 aa).

The stretch at 10–37 (TLEGKAKLENELQELKTVKRKEVVERIK) forms a coiled coil.

The protein belongs to the GreA/GreB family.

Functionally, necessary for efficient RNA polymerase transcription elongation past template-encoded arresting sites. The arresting sites in DNA have the property of trapping a certain fraction of elongating RNA polymerases that pass through, resulting in locked ternary complexes. Cleavage of the nascent transcript by cleavage factors such as GreA or GreB allows the resumption of elongation from the new 3'terminus. GreA releases sequences of 2 to 3 nucleotides. The polypeptide is Transcription elongation factor GreA (Listeria welshimeri serovar 6b (strain ATCC 35897 / DSM 20650 / CCUG 15529 / CIP 8149 / NCTC 11857 / SLCC 5334 / V8)).